A 419-amino-acid polypeptide reads, in one-letter code: Appendage-associated protein (419 aa).

A signal peptide spans 1–39 (MIVTYGTVGCPVSRGGSPGCGRRIAEELRLAEDARLRLA). The stretch at 232-262 (ERQKAQRRREERAAKAREELRKELNDIDAKW) forms a coiled coil.

It is found in the secreted. Functionally, associates with actin filament appendages that are formed in the inclusion appendages of the parasitophorous vacuole during infection of the host erythrocyte. This is Appendage-associated protein from Anaplasma marginale (strain St. Maries).